Consider the following 979-residue polypeptide: Glycine dehydrogenase (decarboxylating) (979 aa).

Lysine 724 is modified (N6-(pyridoxal phosphate)lysine).

It belongs to the GcvP family. As to quaternary structure, the glycine cleavage system is composed of four proteins: P, T, L and H. The cofactor is pyridoxal 5'-phosphate.

It catalyses the reaction N(6)-[(R)-lipoyl]-L-lysyl-[glycine-cleavage complex H protein] + glycine + H(+) = N(6)-[(R)-S(8)-aminomethyldihydrolipoyl]-L-lysyl-[glycine-cleavage complex H protein] + CO2. The glycine cleavage system catalyzes the degradation of glycine. The P protein binds the alpha-amino group of glycine through its pyridoxal phosphate cofactor; CO(2) is released and the remaining methylamine moiety is then transferred to the lipoamide cofactor of the H protein. In Nostoc punctiforme (strain ATCC 29133 / PCC 73102), this protein is Glycine dehydrogenase (decarboxylating).